A 350-amino-acid chain; its full sequence is Renin receptor (350 aa).

Positions 1–17 (MAVLVVLLSSLVSSALA) are cleaved as a signal peptide. Residues 18–302 (NEFSILRSPG…YNLAYKYNLE (285 aa)) are Extracellular-facing. A helical transmembrane segment spans residues 303–323 (YSVVFNLVLWIMTGLALAVII). Topologically, residues 324-350 (TSYNIWNMDPGYDSIIYRMTNQKIRMD) are cytoplasmic. The Mediates retrograde transport to the ER motif lies at 346-350 (KIRMD).

In terms of assembly, interacts with renin. Accessory component of the multisubunit proton-transporting vacuolar (V)-ATPase protein pump. Interacts (via N-terminus) with ATP6AP1 (via N-terminus). Interacts with ATP6V0D1; ATP6V0D1 is a V-ATPase complex subunit and the interaction promotes V-ATPase complex assembly. Interacts with TMEM9; TMEM9 is a V-ATPase assembly regulator and the interaction induces the interaction with ATP6V0D1. Interacts with VMA21 (via N-terminus); VMA21 is a V-ATPase accessory component. Phosphorylated. Post-translationally, proteolytically cleaved by a furin-like convertase in the trans-Golgi network to generate N- and C-terminal fragments. As to expression, expressed in the brain.

The protein localises to the endoplasmic reticulum membrane. It localises to the lysosome membrane. It is found in the cytoplasmic vesicle. The protein resides in the autophagosome membrane. Its subcellular location is the cell projection. The protein localises to the dendritic spine membrane. It localises to the axon. It is found in the endosome membrane. The protein resides in the clathrin-coated vesicle membrane. Its subcellular location is the secretory vesicle. The protein localises to the synaptic vesicle membrane. Its function is as follows. Multifunctional protein which functions as a renin, prorenin cellular receptor and is involved in the assembly of the lysosomal proton-transporting V-type ATPase (V-ATPase) and the acidification of the endo-lysosomal system. May mediate renin-dependent cellular responses by activating ERK1 and ERK2. By increasing the catalytic efficiency of renin in AGT/angiotensinogen conversion to angiotensin I, may also play a role in the renin-angiotensin system (RAS). Through its function in V-type ATPase (v-ATPase) assembly and acidification of the lysosome it regulates protein degradation and may control different signaling pathways important for proper brain development, synapse morphology and synaptic transmission. This Rattus norvegicus (Rat) protein is Renin receptor (Atp6ap2).